A 309-amino-acid chain; its full sequence is NAD-dependent protein deacylase sirtuin-5, mitochondrial (309 aa).

The transit peptide at 1–35 (MILLPFHTRRLVSHVYCGLKPASKKKGIALEMARP) directs the protein to the mitochondrion. One can recognise a Deacetylase sirtuin-type domain in the interval 36 to 306 (SSNLADFREA…PPAIARHETE (271 aa)). Residue 57–76 (GAGVSAESGVPTFRGAGGYW) participates in NAD(+) binding. Positions 101 and 104 each coordinate substrate. 139 to 142 (QNID) contributes to the NAD(+) binding site. Catalysis depends on His-157, which acts as the Proton acceptor. Residues Cys-165, Cys-168, Cys-206, and Cys-211 each coordinate Zn(2+). NAD(+)-binding positions include 248-250 (GTS), 274-276 (NME), and Cys-292.

Belongs to the sirtuin family. Class III subfamily. It depends on Zn(2+) as a cofactor.

Its subcellular location is the mitochondrion. The protein localises to the cytoplasm. It is found in the cytosol. The protein resides in the nucleus. The enzyme catalyses N(6)-malonyl-L-lysyl-[protein] + NAD(+) + H2O = 2''-O-malonyl-ADP-D-ribose + nicotinamide + L-lysyl-[protein]. It carries out the reaction N(6)-succinyl-L-lysyl-[protein] + NAD(+) + H2O = 2''-O-succinyl-ADP-D-ribose + nicotinamide + L-lysyl-[protein]. It catalyses the reaction N(6)-glutaryl-L-lysyl-[protein] + NAD(+) + H2O = 2''-O-glutaryl-ADP-D-ribose + nicotinamide + L-lysyl-[protein]. NAD-dependent lysine demalonylase, desuccinylase and deglutarylase that specifically removes malonyl, succinyl and glutaryl groups on target proteins. Has weak NAD-dependent protein deacetylase activity; however this activity may not be physiologically relevant in vivo. The chain is NAD-dependent protein deacylase sirtuin-5, mitochondrial (sirt5) from Xenopus tropicalis (Western clawed frog).